The primary structure comprises 399 residues: Dual specificity mitogen-activated protein kinase kinase 4 (399 aa).

Residues 1 to 40 (MAAPSPSGGGGSGGGSGSGTPGPVGSPAPGHPAVSSMQGK) form a disordered region. Ala-2 is subject to N-acetylalanine. The segment covering 7–22 (SGGGGSGGGSGSGTPG) has biased composition (gly residues). Residues 37 to 52 (MQGKRKALKLNFANPP) are d domain. Asymmetric dimethylarginine; alternate is present on Arg-58. The residue at position 58 (Arg-58) is an Omega-N-methylarginine; alternate. At Ser-90 the chain carries Phosphoserine. One can recognise a Protein kinase domain in the interval 102–367 (LKDLGEIGRG…YKELLKHPFI (266 aa)). ATP contacts are provided by residues 108–116 (IGRGAYGSV) and Lys-131. The active-site Proton acceptor is the Asp-229. Residue Ser-257 is modified to Phosphoserine; by MAP3K. Thr-261 carries the post-translational modification Phosphothreonine; by MAP3K. The segment at 364–387 (HPFILMYEERAVEVACYVCKILDQ) is DVD domain.

It belongs to the protein kinase superfamily. STE Ser/Thr protein kinase family. MAP kinase kinase subfamily. As to quaternary structure, interacts with SPAG9. Interacts (via its D domain) with its substrates MAPK8/JNK1, MAPK9/JNK2, MAPK10/JNK3, MAPK11 and MAPK14. Interacts (via its DVD domain) with MAP3Ks activators like MAP3K1/MEKK1 and MAP3K11/MLK3. Interacts with ARRB1, ARRB2 and MAPK8IP3/JIP3. Activated by phosphorylation on Ser-257 and Thr-261 by MAP kinase kinase kinases (MAP3Ks). Abundant expression is seen in the skeletal muscle. It is also widely expressed in other tissues.

The protein resides in the cytoplasm. Its subcellular location is the nucleus. It carries out the reaction L-seryl-[protein] + ATP = O-phospho-L-seryl-[protein] + ADP + H(+). It catalyses the reaction L-threonyl-[protein] + ATP = O-phospho-L-threonyl-[protein] + ADP + H(+). The enzyme catalyses L-tyrosyl-[protein] + ATP = O-phospho-L-tyrosyl-[protein] + ADP + H(+). Activated in response to a variety of cellular stresses, including UV and gamma-irradiation, heat shock, hyperosmolarity, T-cell receptor stimulation, peroxide and inflammatory cytokines. Also activated by developmental cues. MAP2K4/MKK4 is activated by the majority of MKKKs, such as MAP3K5/ASK1, MAP3K1/MEKK1, MAP3K7/TAK1, MAP3K10/MLK2, MAP3K11/MLK3, MAP3K12/DLK and MAP3K13/LZK. Dual specificity protein kinase which acts as an essential component of the MAP kinase signal transduction pathway. Essential component of the stress-activated protein kinase/c-Jun N-terminal kinase (SAP/JNK) signaling pathway. With MAP2K7/MKK7, is the one of the only known kinase to directly activate the stress-activated protein kinase/c-Jun N-terminal kinases MAPK8/JNK1, MAPK9/JNK2 and MAPK10/JNK3. MAP2K4/MKK4 and MAP2K7/MKK7 both activate the JNKs by phosphorylation, but they differ in their preference for the phosphorylation site in the Thr-Pro-Tyr motif. MAP2K4 shows preference for phosphorylation of the Tyr residue and MAP2K7/MKK7 for the Thr residue. The phosphorylation of the Thr residue by MAP2K7/MKK7 seems to be the prerequisite for JNK activation at least in response to pro-inflammatory cytokines, while other stimuli activate both MAP2K4/MKK4 and MAP2K7/MKK7 which synergistically phosphorylate JNKs. MAP2K4 is required for maintaining peripheral lymphoid homeostasis. The MKK/JNK signaling pathway is also involved in mitochondrial death signaling pathway, including the release cytochrome c, leading to apoptosis. Whereas MAP2K7/MKK7 exclusively activates JNKs, MAP2K4/MKK4 additionally activates the p38 MAPKs MAPK11, MAPK12, MAPK13 and MAPK14. This chain is Dual specificity mitogen-activated protein kinase kinase 4 (MAP2K4), found in Homo sapiens (Human).